We begin with the raw amino-acid sequence, 352 residues long: S-adenosylmethionine:tRNA ribosyltransferase-isomerase (352 aa).

This sequence belongs to the QueA family. In terms of assembly, monomer.

The protein localises to the cytoplasm. It carries out the reaction 7-aminomethyl-7-carbaguanosine(34) in tRNA + S-adenosyl-L-methionine = epoxyqueuosine(34) in tRNA + adenine + L-methionine + 2 H(+). Its pathway is tRNA modification; tRNA-queuosine biosynthesis. Functionally, transfers and isomerizes the ribose moiety from AdoMet to the 7-aminomethyl group of 7-deazaguanine (preQ1-tRNA) to give epoxyqueuosine (oQ-tRNA). This chain is S-adenosylmethionine:tRNA ribosyltransferase-isomerase, found in Bacteroides fragilis (strain ATCC 25285 / DSM 2151 / CCUG 4856 / JCM 11019 / LMG 10263 / NCTC 9343 / Onslow / VPI 2553 / EN-2).